We begin with the raw amino-acid sequence, 1086 residues long: Selenocysteine insertion sequence-binding protein 2-like (1086 aa).

5 disordered regions span residues 155-207 (GQAF…GPDS), 243-386 (AKGR…SESL), 615-657 (QEDA…SPMA), 880-904 (SDGL…KPSR), and 919-1086 (AAGS…PQST). A compositionally biased stretch (polar residues) spans 193–206 (NVATQKETSATGPD). The residue at position 276 (Ser-276) is a Phosphoserine. Polar residues-rich tracts occupy residues 294–303 (GTMNRLESSG) and 328–344 (QAFS…NNLQ). Over residues 355–370 (SSERRQNLQKRQDNKH) the composition is skewed to basic and acidic residues. Residues 624-657 (SDASLSPASQNSPYCMTPVSQGSPASSGIGSPMA) are compositionally biased toward polar residues. The span at 922-931 (SITSAPSQGK) shows a compositional bias: polar residues. Residues 933-943 (TGDKDELKPDD) show a composition bias toward basic and acidic residues. Positions 947–957 (ASQQSTETGSL) are enriched in polar residues. A compositionally biased stretch (acidic residues) spans 981–994 (LEEEEDEEEEEEDY). Polar residues predominate over residues 1004–1022 (QLNSRIESWVSETQRTMET). The span at 1032–1046 (SEEDSAEQSGEEAAE) shows a compositional bias: acidic residues.

In terms of biological role, binds SECIS (Sec insertion sequence) elements present on selenocysteine (Sec) protein mRNAs, but does not promote Sec incorporation into selenoproteins. The polypeptide is Selenocysteine insertion sequence-binding protein 2-like (Secisbp2l) (Mus musculus (Mouse)).